Consider the following 299-residue polypeptide: MQMESYYGAFHADEAAFFFPHHVPASPELPFGLIASPEPEPEPEQAAAEARQSAFQEYGGAVHAGAPAAAGAVTTGGTNIHRRVMDVLGRMGGGGGGGEKGEGEEMEEEEEVPQRRRRGQGADVESSRGFRHMMRERQRREKLSQSYADLYAMVSSRSKGDKNSIVQSAAIYIHELKVARDQLQRRNEELKAQIMGHDEQQPCVTVQFEVDEPSSSIDSMIAALRRLKGMSVKARGIRSSMSGNRLWTEMNVETTIAACEVEKAVEEALKEVERNQPDSDAPFPGSKGWTQTSHVQNVF.

The interval 90–127 (RMGGGGGGGEKGEGEEMEEEEEVPQRRRRGQGADVESS) is disordered. The span at 102-111 (EGEEMEEEEE) shows a compositional bias: acidic residues. The tract at residues 127-140 (SRGFRHMMRERQRR) is basic motif; degenerate. In terms of domain architecture, bHLH spans 127-176 (SRGFRHMMRERQRREKLSQSYADLYAMVSSRSKGDKNSIVQSAAIYIHEL). The interval 141-176 (EKLSQSYADLYAMVSSRSKGDKNSIVQSAAIYIHEL) is helix-loop-helix motif. The tract at residues 273–299 (ERNQPDSDAPFPGSKGWTQTSHVQNVF) is disordered. Polar residues predominate over residues 288 to 299 (GWTQTSHVQNVF).

It belongs to the bHLH protein family. In terms of assembly, interacts with TIFY10A/JAZ6, TIFY10B/JAZ7, TIFY11A/JAZ9, TIFY11C/JAZ11, and TIFY11D/JAZ12.

Its subcellular location is the nucleus. In terms of biological role, may act on an initial response of jasmonate-regulated gene expression toward drought tolerance as part of a BHLH148-TIFY11D/JAZ12-COI1A complex. The polypeptide is Transcription factor BHLH148 (Oryza sativa subsp. japonica (Rice)).